Reading from the N-terminus, the 135-residue chain is uncharacterized protein (135 aa).

The next 4 helical transmembrane spans lie at 4-24 (IIIC…WIFG), 26-46 (WDMP…TGVI), 68-88 (LILV…NGAW), and 93-113 (LIAY…CAAL).

Belongs to the bacteriophage holin family. Cp-1 holin subfamily.

It localises to the cell membrane. This is an uncharacterized protein from Clostridium perfringens (strain 13 / Type A).